The primary structure comprises 428 residues: 3-phosphoshikimate 1-carboxyvinyltransferase (428 aa).

Residues lysine 21, serine 22, and arginine 26 each coordinate 3-phosphoshikimate. Lysine 21 is a binding site for phosphoenolpyruvate. Residues glycine 91 and arginine 119 each contribute to the phosphoenolpyruvate site. 3-phosphoshikimate contacts are provided by serine 164, glutamine 166, aspartate 313, and lysine 340. Phosphoenolpyruvate is bound at residue glutamine 166. Residue aspartate 313 is the Proton acceptor of the active site. 2 residues coordinate phosphoenolpyruvate: arginine 344 and arginine 386.

This sequence belongs to the EPSP synthase family. Monomer.

It is found in the cytoplasm. The catalysed reaction is 3-phosphoshikimate + phosphoenolpyruvate = 5-O-(1-carboxyvinyl)-3-phosphoshikimate + phosphate. It participates in metabolic intermediate biosynthesis; chorismate biosynthesis; chorismate from D-erythrose 4-phosphate and phosphoenolpyruvate: step 6/7. Its function is as follows. Catalyzes the transfer of the enolpyruvyl moiety of phosphoenolpyruvate (PEP) to the 5-hydroxyl of shikimate-3-phosphate (S3P) to produce enolpyruvyl shikimate-3-phosphate and inorganic phosphate. In Campylobacter jejuni (strain RM1221), this protein is 3-phosphoshikimate 1-carboxyvinyltransferase.